Consider the following 79-residue polypeptide: Cytochrome c oxidase subunit 7A1, mitochondrial (79 aa).

The transit peptide at 1–21 (MQALRVSQALIRSFSSTARNR) directs the protein to the mitochondrion. The Mitochondrial matrix segment spans residues 22 to 46 (FQNRVREKQKLFQEDNDIPLYLKGG). A helical membrane pass occupies residues 47-75 (IVDNILYRVTMTLCLGGTVYSLYSLGWAS). Topologically, residues 76-79 (FPRN) are mitochondrial intermembrane.

The protein belongs to the cytochrome c oxidase VIIa family. In terms of assembly, component of the complex IV (CIV, cytochrome c oxidase), a multisubunit enzyme composed of 14 subunits. The complex is composed of a catalytic core of 3 subunits MT-CO1, MT-CO2 and MT-CO3, encoded in the mitochondrial DNA, and 11 supernumerary subunits COX4I1 (or COX4I2), COX5A, COX5B, COX6A2 (or COX6A1), COX6B1 (or COX6B2), COX6C, COX7A1 (or COX7A2), COX7B, COX7C, COX8B and NDUFA4, which are encoded in the nuclear genome. The complex exists as a monomer or a dimer and forms supercomplexes (SCs) in the inner mitochondrial membrane with NADH-ubiquinone oxidoreductase (complex I, CI) and ubiquinol-cytochrome c oxidoreductase (cytochrome b-c1 complex, complex III, CIII), resulting in different assemblies (supercomplex SCI(1)III(2)IV(1) and megacomplex MCI(2)III(2)IV(2)).

The protein localises to the mitochondrion inner membrane. It functions in the pathway energy metabolism; oxidative phosphorylation. Component of the mitochondrial respiratory complex IV (CIV, also named cytochrome c oxidase complex), the last enzyme in the mitochondrial electron transport chain which drives oxidative phosphorylation. The CIV complex is the component of the respiratory chain that catalyzes the reduction of oxygen to water. Acts as an assembly factor that specifically drives the homodimerization of CIV complexes, mediating the formation of mitochondrial respiratory supercomplexes (respirasomes) containing two CIV: supercomplxes with two molecules of CIV show improved activity. Despite being highly expressed in brown adipose tissue, not required for thermogenesis. This Homo sapiens (Human) protein is Cytochrome c oxidase subunit 7A1, mitochondrial (COX7A1).